Consider the following 1115-residue polypeptide: Integrin alpha-PS3 (1115 aa).

The first 24 residues, 1 to 24, serve as a signal peptide directing secretion; it reads MNAESTMFPHIFLALLALISHIEA. Residues 25–1054 are Extracellular-facing; sequence FNFMPRPSRV…PNIISKHQET (1030 aa). 7 FG-GAP repeats span residues 39–99, 113–174, 193–246, 278–335, 336–397, 398–453, and 460–522; these read KHLK…VCSP, SEYT…STPQ, DNGN…VDNP, IPTP…GKSI, HKYH…FNFE, RQIL…GLRD, and DAPS…SESR. Residues Asn46, Asn82, and Asn166 are each glycosylated (N-linked (GlcNAc...) asparagine). Asn438 carries N-linked (GlcNAc...) asparagine glycosylation. 4 N-linked (GlcNAc...) asparagine glycosylation sites follow: Asn696, Asn845, Asn868, and Asn964. Residues 1055 to 1075 traverse the membrane as a helical segment; sequence GLPIWIIIVSVIGGLLLLSAI. Residues 1076 to 1115 are Cytoplasmic-facing; it reads SYLLYKFGFFNRTKKDELDRLVQQNPVEPEAENLNSGGNN.

Belongs to the integrin alpha chain family. As to quaternary structure, heterodimer of an alpha and a beta subunit. The alpha subunit is composed of a heavy and a light chain linked by a disulfide bond. Interacts with mys/beta-PS and Itgbn. In terms of tissue distribution, expressed in embryonic and larval hemocytes (at protein level). Expressed in tissues undergoing invagination, tissue movement and morphogenesis such as salivary gland, trachea, midgut endoderm, dorsal vessel, midline of the ventral nerve cord, amnioserosa and the amnioproctodeal invagination. Expressed in the mushroom body neuropil, brain areas that contain mushroom body processes in synaptic contact with other neurons. In egg chambers, expressed in border cells, in stretch cells and in dorsal appendage primordia.

The protein localises to the apical cell membrane. It localises to the lateral cell membrane. It is found in the cytoplasm. Functionally, integrin alpha-PS3/beta-PS is a receptor for laminin. Also binds to wb. Important during embryogenesis for the development of the trachea, dorsal vessel and salivary gland, as well as for dorsal closure. Required for short-term memory processes. Minor involvement in the establishment of the oocyte anterior-posterior length. Plays a role in timely border cell migration during oogenesis, probably mediated by JNK signaling. Integrin alpha-PS3/Itgbn is required for effective phagocytosis of apoptotic cells during embryonic development and for the phagocytic elimination of S.aureus by mediating the binding of S.aureus peptidoglycan to larval hemocytes, which probably activates a signaling pathway involving Rac1 and Rac2. Integrin alpha-PS3/Itgbn also regulates Fak activity during neuromuscular junction (NMJ) growth and is required for its activation in presynapsis of NMJs. Seems to be dispensable for major morphogenetic processes. This Drosophila melanogaster (Fruit fly) protein is Integrin alpha-PS3 (scb).